The primary structure comprises 189 residues: NADH dehydrogenase [ubiquinone] 1 beta subcomplex subunit 5, mitochondrial (189 aa).

The transit peptide at 1 to 46 (MAGMSLLRRVSVTAVAALSGRSLGTRLGFGGFLTRGFPKAVAPVRH) directs the protein to the mitochondrion. The chain crosses the membrane as a helical span at residues 73–93 (FYIALTGIPVVIIITLVNVFI).

This sequence belongs to the complex I NDUFB5 subunit family. In terms of assembly, complex I is composed of 45 different subunits.

The protein localises to the mitochondrion inner membrane. Accessory subunit of the mitochondrial membrane respiratory chain NADH dehydrogenase (Complex I), that is believed not to be involved in catalysis. Complex I functions in the transfer of electrons from NADH to the respiratory chain. The immediate electron acceptor for the enzyme is believed to be ubiquinone. This is NADH dehydrogenase [ubiquinone] 1 beta subcomplex subunit 5, mitochondrial (NDUFB5) from Macaca fascicularis (Crab-eating macaque).